The following is a 410-amino-acid chain: Lysosome-associated membrane glycoprotein 2 (410 aa).

Residues 1-28 form the signal peptide; that stretch reads MMCFRLSPVSGSGLVLSCLLLGAVQSYA. Positions 29–192 are first lumenal domain; it reads FELNLPDSKA…SKEEFVCEED (164 aa). Over 29 to 375 the chain is Lumenal; that stretch reads FELNLPDSKA…QDCSADEDNF (347 aa). A disulfide bridge links cysteine 40 with cysteine 79. Asparagine 48, asparagine 58, asparagine 71, asparagine 75, asparagine 99, asparagine 119, asparagine 123, asparagine 179, asparagine 222, asparagine 229, asparagine 242, asparagine 260, asparagine 275, asparagine 300, asparagine 307, asparagine 317, and asparagine 356 each carry an N-linked (GlcNAc...) asparagine glycan. A disulfide bridge connects residues cysteine 153 and cysteine 189. The hinge stretch occupies residues 193–228; the sequence is KSVTTVRPIIHTTVPPPTTTPTPLPPKVGNYSVSNG. The interval 229 to 375 is second lumenal domain; sequence NATCLLATMG…QDCSADEDNF (147 aa). Cysteine 232 and cysteine 265 are oxidised to a cystine. An intrachain disulfide couples cysteine 331 to cysteine 368. A helical transmembrane segment spans residues 376–399; it reads LVPIAVGAALAGVLALVLLAYFIG. Topologically, residues 400-410 are cytoplasmic; that stretch reads LKRHHTGYEQF. An important for binding and subsequent lysosomal degradation of target proteins region spans residues 401–404; it reads KRHH.

Belongs to the LAMP family. In terms of assembly, monomer. Forms large homooligomers. Interacts (via its cytoplasmic region) with HSPA8; HSPA8 mediates recruitment of proteins with a KFERQ motif to the surface of the lysosome for chaperone-mediated autophagy. Interacts with HSP90 in the lysosome lumen; this enhances LAMP2 stability. Interacts with MLLT11. Interacts with ABCB9. Interacts with FURIN. Interacts with CT55; this interaction may be important for LAMP2 protein stability. Interacts with TMEM175; inhibiting the proton channel activity of TMEM175. Forms a ternary complex with RAB7A and RUFY4 (via RUN domain); the interaction with RAB7A is mediated by RUFY4 (via RUN and coiled coil domains). In terms of processing, extensively N-glycosylated. Contains a minor proportion of O-linked glycans.

It is found in the lysosome membrane. The protein resides in the endosome membrane. It localises to the cell membrane. The protein localises to the cytoplasmic vesicle. Its subcellular location is the autophagosome membrane. Functionally, lysosomal membrane glycoprotein which plays an important role in lysosome biogenesis, lysosomal pH regulation and autophagy. Acts as an important regulator of lysosomal lumen pH regulation by acting as a direct inhibitor of the proton channel TMEM175, facilitating lysosomal acidification for optimal hydrolase activity. Plays an important role in chaperone-mediated autophagy, a process that mediates lysosomal degradation of proteins in response to various stresses and as part of the normal turnover of proteins with a long biological half-live. Functions by binding target proteins, such as GAPDH, NLRP3 and MLLT11, and targeting them for lysosomal degradation. In the chaperone-mediated autophagy, acts downstream of chaperones, such as HSPA8/HSC70, which recognize and bind substrate proteins and mediate their recruitment to lysosomes, where target proteins bind LAMP2. Plays a role in lysosomal protein degradation in response to starvation. Required for the fusion of autophagosomes with lysosomes during autophagy. Cells that lack LAMP2 express normal levels of VAMP8, but fail to accumulate STX17 on autophagosomes, which is the most likely explanation for the lack of fusion between autophagosomes and lysosomes. Required for normal degradation of the contents of autophagosomes. Required for efficient MHC class II-mediated presentation of exogenous antigens via its function in lysosomal protein degradation; antigenic peptides generated by proteases in the endosomal/lysosomal compartment are captured by nascent MHC II subunits. Is not required for efficient MHC class II-mediated presentation of endogenous antigens. This chain is Lysosome-associated membrane glycoprotein 2 (LAMP2), found in Cricetulus griseus (Chinese hamster).